A 434-amino-acid chain; its full sequence is Putative peptidase B (434 aa).

2 residues coordinate Mn(2+): lysine 198 and aspartate 203. Residue lysine 210 is part of the active site. Residues aspartate 221, aspartate 280, and glutamate 282 each contribute to the Mn(2+) site. Arginine 284 is an active-site residue.

It belongs to the peptidase M17 family. As to quaternary structure, homohexamer. Mn(2+) is required as a cofactor.

It localises to the cytoplasm. The enzyme catalyses Release of an N-terminal amino acid, Xaa, from a peptide or arylamide. Xaa is preferably Glu or Asp but may be other amino acids, including Leu, Met, His, Cys and Gln.. Its function is as follows. Probably plays an important role in intracellular peptide degradation. This is Putative peptidase B from Haemophilus influenzae (strain ATCC 51907 / DSM 11121 / KW20 / Rd).